We begin with the raw amino-acid sequence, 122 residues long: Large ribosomal subunit protein uL14 (122 aa).

Belongs to the universal ribosomal protein uL14 family. As to quaternary structure, part of the 50S ribosomal subunit. Forms a cluster with proteins L3 and L19. In the 70S ribosome, L14 and L19 interact and together make contacts with the 16S rRNA in bridges B5 and B8.

In terms of biological role, binds to 23S rRNA. Forms part of two intersubunit bridges in the 70S ribosome. The sequence is that of Large ribosomal subunit protein uL14 from Desulfatibacillum aliphaticivorans.